The following is a 296-amino-acid chain: Hca operon transcriptional activator HcaR (296 aa).

Residues 1–58 (MELRHLRYFVAVAQALNFTRAAEKLHTSQPSLSSQIRDLENCVGVPLLVRDKRKVALT) form the HTH lysR-type domain. Residues 18–38 (FTRAAEKLHTSQPSLSSQIRD) constitute a DNA-binding region (H-T-H motif).

It belongs to the LysR transcriptional regulatory family.

Functionally, transcriptional activator of the hca operon for 3-phenylpropionic acid catabolism. The sequence is that of Hca operon transcriptional activator HcaR (hcaR) from Escherichia coli (strain K12).